The sequence spans 468 residues: H(+)/Cl(-) exchange transporter ClcA (468 aa).

The Cytoplasmic segment spans residues 1–30; it reads MSTRETFKISLLAKMPKDVINQFLSKDKTP. The helical transmembrane segment at 31–67 threads the bilayer; sequence FSVLFLSLLVGILAGLVGTYFEQAVHLVSETRTDWLK. Topologically, residues 68–74 are periplasmic; it reads SEIGSFL. The chain crosses the membrane as a helical span at residues 75 to 98; the sequence is PLWLAAFLISAFLAFIGYFLVHRF. Positions 104 to 108 match the Selectivity filter part_1 motif; sequence GSGIP. Ser-105 contacts chloride. Positions 107–114 form an intramembrane region, helical; the sequence is IPEIEGAM. The Cytoplasmic segment spans residues 115–121; it reads DGMRPVR. 2 consecutive transmembrane segments (helical) span residues 122-139 and 146-164; these read WWRV…ALGS and EGPT…SDIF. Residues 144-148 carry the Selectivity filter part_2 motif; sequence GREGP. Topologically, residues 165–174 are cytoplasmic; it reads RVKNEDTRHS. Intramembrane regions (helical) lie at residues 175 to 187 and 191 to 199; these read LLAA…LAAA and PLAGIMFVI. Residues 200 to 212 lie on the Cytoplasmic side of the membrane; that stretch reads EEMRPQFRYTLIS. The chain crosses the membrane as a helical span at residues 213–230; sequence VRAVIISAVAANIVFRVI. Over 231–250 the chain is Periplasmic; that stretch reads NGQDAVITMPQYDAPELSTL. The helical transmembrane segment at 251–279 threads the bilayer; the sequence is GLFLLLGALFGVFGVLFNYLITLAQDLFV. At 280-285 the chain is on the cytoplasmic side; the sequence is KFHRND. A helical membrane pass occupies residues 286–307; it reads RKRYLLTGSMIGGCFGLLLLYV. Residues 308 to 327 are Periplasmic-facing; that stretch reads PELTGGGISLIPTITNGGYG. The next 2 helical transmembrane spans lie at 328 to 347 and 353 to 374; these read AGIL…LCFG and GIFA…LIAK. The Selectivity filter part_3 signature appears at 353 to 357; sequence GIFAP. Chloride contacts are provided by Ile-354 and Phe-355. Residues 375–384 lie on the Periplasmic side of the membrane; it reads VWFPELNIEP. Positions 385–399 form an intramembrane region, helical; it reads GMFAIAGMGALFAAT. Residues 400–402 constitute an intramembrane region (note=Loop between two helices); it reads VRA. The helical intramembrane region spans 403–414; the sequence is PITGILLVIEMT. The segment at residues 415–419 is an intramembrane region (note=Loop between two helices); the sequence is NNYHL. Residues 420 to 436 traverse the membrane as a helical segment; it reads ILPLIITSLGAVIFAQL. The Cytoplasmic segment spans residues 437 to 468; it reads LGGQPIYSQLLHRTLKNQKLQQQDLPPQSPNS. Tyr-443 lines the chloride pocket.

Belongs to the chloride channel (TC 2.A.49) family. ClcA subfamily. In terms of assembly, homodimer.

It is found in the cell inner membrane. It carries out the reaction 2 chloride(in) + H(+)(out) = 2 chloride(out) + H(+)(in). In terms of biological role, proton-coupled chloride transporter. Functions as antiport system and exchanges two chloride ions for 1 proton. Probably acts as an electrical shunt for an outwardly-directed proton pump that is linked to amino acid decarboxylation, as part of the extreme acid resistance (XAR) response. This Vibrio cholerae serotype O1 (strain ATCC 39541 / Classical Ogawa 395 / O395) protein is H(+)/Cl(-) exchange transporter ClcA.